The primary structure comprises 245 residues: Cuticle protein (245 aa).

Positions 25-86 constitute a Chitin-binding type R&amp;R domain; it reads VSYAAAPALV…TGDSKSQQES (62 aa). Residues 79–100 form a disordered region; sequence DSKSQQESRSGDVVQGSYSVVD. Repeat copies occupy residues 92–95, 108–111, and 118–121.

Component of the cuticle of African malaria mosquito. This is Cuticle protein (Ccp84Ab) from Anopheles gambiae (African malaria mosquito).